A 513-amino-acid chain; its full sequence is ATP synthase subunit alpha 2 (513 aa).

152-159 (GDSKTGKT) lines the ATP pocket.

The protein belongs to the ATPase alpha/beta chains family. In terms of assembly, F-type ATPases have 2 components, CF(1) - the catalytic core - and CF(0) - the membrane proton channel. CF(1) has five subunits: alpha(3), beta(3), gamma(1), delta(1), epsilon(1). CF(0) has three main subunits: a(1), b(2) and c(9-12). The alpha and beta chains form an alternating ring which encloses part of the gamma chain. CF(1) is attached to CF(0) by a central stalk formed by the gamma and epsilon chains, while a peripheral stalk is formed by the delta and b chains.

It is found in the cell membrane. It carries out the reaction ATP + H2O + 4 H(+)(in) = ADP + phosphate + 5 H(+)(out). Produces ATP from ADP in the presence of a proton gradient across the membrane. The alpha chain is a regulatory subunit. The sequence is that of ATP synthase subunit alpha 2 from Mycoplasmopsis pulmonis (strain UAB CTIP) (Mycoplasma pulmonis).